Here is a 450-residue protein sequence, read N- to C-terminus: Tripartite motif-containing protein 64C (450 aa).

An RING-type zinc finger spans residues 15-56 (CCICVNYFIDPVTTDCVHSFCRPCLCLCSEEGRAPMRCPLCR). The B box-type zinc-finger motif lies at 87–128 (SSDNICVLHEETKELFCEADKRLLCGPCSESPEHMAHSHSPI). Residues cysteine 92, histidine 95, cysteine 114, and histidine 120 each coordinate Zn(2+). Residues 191–218 (DEEEQRHLQALEREAKELFQQLQDSQVR) are a coiled coil. One can recognise a B30.2/SPRY domain in the interval 269 to 450 (ELTSWCITGV…LRPFFCFGCT (182 aa)).

This sequence belongs to the TRIM/RBCC family.

The protein is Tripartite motif-containing protein 64C (TRIM64C) of Homo sapiens (Human).